The primary structure comprises 177 residues: Large ribosomal subunit protein uL6 (177 aa).

The protein belongs to the universal ribosomal protein uL6 family. In terms of assembly, part of the 50S ribosomal subunit.

In terms of biological role, this protein binds to the 23S rRNA, and is important in its secondary structure. It is located near the subunit interface in the base of the L7/L12 stalk, and near the tRNA binding site of the peptidyltransferase center. The chain is Large ribosomal subunit protein uL6 from Histophilus somni (strain 2336) (Haemophilus somnus).